We begin with the raw amino-acid sequence, 233 residues long: Large ribosomal subunit protein uL1 (233 aa).

Belongs to the universal ribosomal protein uL1 family. In terms of assembly, part of the 50S ribosomal subunit.

Functionally, binds directly to 23S rRNA. The L1 stalk is quite mobile in the ribosome, and is involved in E site tRNA release. Its function is as follows. Protein L1 is also a translational repressor protein, it controls the translation of the L11 operon by binding to its mRNA. This Shewanella sp. (strain ANA-3) protein is Large ribosomal subunit protein uL1.